Consider the following 613-residue polypeptide: Probable Xaa-Pro aminopeptidase P (613 aa).

4 residues coordinate Mn(2+): Asp408, Asp419, Glu517, and Glu531.

It belongs to the peptidase M24B family. Requires Mn(2+) as cofactor.

The enzyme catalyses Release of any N-terminal amino acid, including proline, that is linked to proline, even from a dipeptide or tripeptide.. Catalyzes the removal of a penultimate prolyl residue from the N-termini of peptides. This chain is Probable Xaa-Pro aminopeptidase P (ampp), found in Penicillium rubens (strain ATCC 28089 / DSM 1075 / NRRL 1951 / Wisconsin 54-1255) (Penicillium chrysogenum).